Consider the following 846-residue polypeptide: Cap-specific mRNA (nucleoside-2'-O-)-methyltransferase 1 (846 aa).

The interval 1-81 (MKRKSDSEQQ…LPDTLAEGSS (81 aa)) is disordered. The Bipartite nuclear localization signal signature appears at 2–20 (KRKSDSEQQPSVQCRKKKR). Residues 27-45 (NLSSTSDDDTQYSNHGTQE) are compositionally biased toward polar residues. Residues 87–133 (YNSVSQKLMAKMGFREGEGLGKFGQGRKEIVETSKQKGRRGLGMVLK) enclose the G-patch domain. Substrate is bound by residues 203 to 207 (KSAFD) and arginine 218. The region spanning 231 to 450 (FFLNRAAMKM…ERYVVCRGLK (220 aa)) is the RrmJ-type SAM-dependent 2'-O-MTase domain. Residue asparagine 234 participates in S-adenosyl-L-methionine binding. Residue lysine 239 is part of the active site. S-adenosyl-L-methionine-binding positions include 277 to 283 (CAGPGGF) and 335 to 336 (DV). Aspartate 364 is a catalytic residue. 374–376 (NIQ) serves as a coordination point for substrate. Lysine 404 acts as the Proton acceptor in catalysis. Asparagine 439 is a substrate binding site. The 35-residue stretch at 752–786 (KTINEPWSMAYSKSQKRKYFYNSKTKNSQFELPVE) folds into the WW domain.

It is found in the nucleus. It catalyses the reaction a 5'-end (N(7)-methyl 5'-triphosphoguanosine)-ribonucleoside in mRNA + S-adenosyl-L-methionine = a 5'-end (N(7)-methyl 5'-triphosphoguanosine)-(2'-O-methyl-ribonucleoside) in mRNA + S-adenosyl-L-homocysteine + H(+). S-adenosyl-L-methionine-dependent methyltransferase that mediates mRNA cap1 2'-O-ribose methylation to the 5'-cap structure of mRNAs. Methylates the ribose of the first nucleotide of a m(7)GpppG-capped mRNA and small nuclear RNA (snRNA) to produce m(7)GpppRm (cap1). Displays a preference for cap0 transcripts. Cap1 modification is linked to higher levels of translation. May be involved in the interferon response pathway. The protein is Cap-specific mRNA (nucleoside-2'-O-)-methyltransferase 1 (cmtr1) of Xenopus laevis (African clawed frog).